A 648-amino-acid polypeptide reads, in one-letter code: Threonine--tRNA ligase (648 aa).

Positions 1 to 61 (MITITFPDGA…EEDGSIEIIT (61 aa)) constitute a TGS domain. The interval 242–540 (DHRKLGKELD…LIETYKGAFP (299 aa)) is catalytic. Zn(2+) contacts are provided by Cys-336, His-387, and His-517.

It belongs to the class-II aminoacyl-tRNA synthetase family. As to quaternary structure, homodimer. The cofactor is Zn(2+).

The protein resides in the cytoplasm. It catalyses the reaction tRNA(Thr) + L-threonine + ATP = L-threonyl-tRNA(Thr) + AMP + diphosphate + H(+). In terms of biological role, catalyzes the attachment of threonine to tRNA(Thr) in a two-step reaction: L-threonine is first activated by ATP to form Thr-AMP and then transferred to the acceptor end of tRNA(Thr). Also edits incorrectly charged L-seryl-tRNA(Thr). This Streptococcus equi subsp. zooepidemicus (strain H70) protein is Threonine--tRNA ligase.